The following is a 26-amino-acid chain: M-poneritoxin-Ng1d (26 aa).

In terms of tissue distribution, expressed by the venom gland.

It localises to the secreted. The protein localises to the target cell membrane. In terms of biological role, has a broad spectrum of activity against both Gram-positive and Gram-negative bacteria and S.cerevisiae. Has insecticidal and hemolytic activities. May act by disrupting the integrity of the bacterial cell membrane. This Neoponera goeldii (Ponerine ant) protein is M-poneritoxin-Ng1d.